The following is a 232-amino-acid chain: Small ribosomal subunit protein uS3 (232 aa).

Positions 39-107 (VRQFLTKELA…PAQINIAEVR (69 aa)) constitute a KH type-2 domain.

The protein belongs to the universal ribosomal protein uS3 family. Part of the 30S ribosomal subunit. Forms a tight complex with proteins S10 and S14.

Functionally, binds the lower part of the 30S subunit head. Binds mRNA in the 70S ribosome, positioning it for translation. This Yersinia pestis bv. Antiqua (strain Antiqua) protein is Small ribosomal subunit protein uS3.